Reading from the N-terminus, the 154-residue chain is Prefoldin subunit 2 (154 aa).

Disordered regions lie at residues Met1–Ala20 and Leu126–Ser154. Gly residues predominate over residues Gly9 to Lys18. Basic and acidic residues predominate over residues Leu126 to Ser139. Residues Gly141–Ser154 are compositionally biased toward low complexity.

Belongs to the prefoldin subunit beta family. In terms of assembly, heterohexamer of two PFD-alpha type and four PFD-beta type subunits. Component of the PAQosome complex which is responsible for the biogenesis of several protein complexes and which consists of R2TP complex members RUVBL1, RUVBL2, RPAP3 and PIH1D1, URI complex members PFDN2, PFDN6, PDRG1, UXT and URI1 as well as ASDURF, POLR2E and DNAAF10/WDR92. Interacts with URI1; the interaction is phosphorylation-dependent and occurs in a growth-dependent manner.

It is found in the nucleus. Its subcellular location is the cytoplasm. The protein resides in the mitochondrion. Its function is as follows. Binds specifically to cytosolic chaperonin (c-CPN) and transfers target proteins to it. Binds to nascent polypeptide chain and promotes folding in an environment in which there are many competing pathways for nonnative proteins. The sequence is that of Prefoldin subunit 2 (Pfdn2) from Rattus norvegicus (Rat).